The primary structure comprises 258 residues: Probable parvulin-type peptidyl-prolyl cis-trans isomerase (258 aa).

Positions 1-19 are cleaved as a signal peptide; that stretch reads MKRIAMLAAACVIAVPAFA. Residues 127–219 enclose the PpiC domain; sequence KMEYKVRHIL…FGWHVIQVDD (93 aa).

It belongs to the PpiC/parvulin rotamase family.

The enzyme catalyses [protein]-peptidylproline (omega=180) = [protein]-peptidylproline (omega=0). The protein is Probable parvulin-type peptidyl-prolyl cis-trans isomerase of Bordetella parapertussis (strain 12822 / ATCC BAA-587 / NCTC 13253).